The primary structure comprises 136 residues: Urease subunit beta (136 aa).

It belongs to the urease beta subunit family. In terms of assembly, heterotrimer of UreA (gamma), UreB (beta) and UreC (alpha) subunits. Three heterotrimers associate to form the active enzyme.

It localises to the cytoplasm. The enzyme catalyses urea + 2 H2O + H(+) = hydrogencarbonate + 2 NH4(+). It functions in the pathway nitrogen metabolism; urea degradation; CO(2) and NH(3) from urea (urease route): step 1/1. The chain is Urease subunit beta from Staphylococcus aureus (strain Mu3 / ATCC 700698).